The sequence spans 471 residues: MKKTLYQKLYDSHIVYEEKSQSPILYIDLHLVHEVTSPQAFFSLCSKNRVVRQPKKTFATMDHNVSTIDRNIDSSGLLAKKQMEALIKNCTKFNIKLFDLNHPHQGIVHVIGPEQGITLPGMTIVCGDSHTSTHGAFGALAFGIGTSEVEHVLATQTLKQNRLKSMHIKINGDIDIGITAKDIILFVIKQLGVSRGLGYVIEFSGEIVSKLSMESRMTLCNMSIEMGAKSGIIAPDSVTFSYLCNRKYVPKGKNWNLAIDYWKTLKSDTGAIFDQEFNIDISNLSPQVTWGTNPSQVISINDTIPHLESYSDPIERRSAELSLLYMGLEPGMSLIDVNIQKVFIGSCTNSRIEDLRAVAKIVMNKRVCNSVHAIIVPGSGMVKMQAEKEGLDKIFKNSGFEWRYSGCSMCLAMNDDRLNNKERCASTSNRNFEGRQGRGGRTHLVSPVMAAAAAIFGRFVDVRTIYNSLDK.

[4Fe-4S] cluster contacts are provided by C347, C407, and C410.

It belongs to the aconitase/IPM isomerase family. LeuC type 1 subfamily. Heterodimer of LeuC and LeuD. Requires [4Fe-4S] cluster as cofactor.

The enzyme catalyses (2R,3S)-3-isopropylmalate = (2S)-2-isopropylmalate. It participates in amino-acid biosynthesis; L-leucine biosynthesis; L-leucine from 3-methyl-2-oxobutanoate: step 2/4. Its function is as follows. Catalyzes the isomerization between 2-isopropylmalate and 3-isopropylmalate, via the formation of 2-isopropylmaleate. This Buchnera aphidicola subsp. Baizongia pistaciae (strain Bp) protein is 3-isopropylmalate dehydratase large subunit.